The sequence spans 199 residues: RNA-free ribonuclease P (199 aa).

The protein belongs to the HARP family.

The enzyme catalyses Endonucleolytic cleavage of RNA, removing 5'-extranucleotides from tRNA precursor.. Functionally, RNA-free RNase P that catalyzes the removal of the 5'-leader sequence from pre-tRNA to produce the mature 5'-terminus. The sequence is that of RNA-free ribonuclease P from Pyrococcus furiosus (strain ATCC 43587 / DSM 3638 / JCM 8422 / Vc1).